Here is a 351-residue protein sequence, read N- to C-terminus: Methionine import ATP-binding protein MetN (351 aa).

The 240-residue stretch at Ile-2–Thr-241 folds into the ABC transporter domain. Gly-38–Ser-45 serves as a coordination point for ATP.

Belongs to the ABC transporter superfamily. Methionine importer (TC 3.A.1.24) family. As to quaternary structure, the complex is composed of two ATP-binding proteins (MetN), two transmembrane proteins (MetI) and a solute-binding protein (MetQ).

It localises to the cell inner membrane. It carries out the reaction L-methionine(out) + ATP + H2O = L-methionine(in) + ADP + phosphate + H(+). The enzyme catalyses D-methionine(out) + ATP + H2O = D-methionine(in) + ADP + phosphate + H(+). Its function is as follows. Part of the ABC transporter complex MetNIQ involved in methionine import. Responsible for energy coupling to the transport system. In Coxiella burnetii (strain RSA 493 / Nine Mile phase I), this protein is Methionine import ATP-binding protein MetN.